A 64-amino-acid polypeptide reads, in one-letter code: Large ribosomal subunit protein bL35 (64 aa).

Over residues 1–15 (MPKNKTHSGTAKRFR) the composition is skewed to basic residues. The interval 1 to 27 (MPKNKTHSGTAKRFRVTGSGKLRREQA) is disordered.

The protein belongs to the bacterial ribosomal protein bL35 family.

This chain is Large ribosomal subunit protein bL35, found in Saccharopolyspora erythraea (strain ATCC 11635 / DSM 40517 / JCM 4748 / NBRC 13426 / NCIMB 8594 / NRRL 2338).